A 186-amino-acid polypeptide reads, in one-letter code: Ribosome-recycling factor (186 aa).

This sequence belongs to the RRF family.

The protein resides in the cytoplasm. Its function is as follows. Responsible for the release of ribosomes from messenger RNA at the termination of protein biosynthesis. May increase the efficiency of translation by recycling ribosomes from one round of translation to another. This Acidovorax ebreus (strain TPSY) (Diaphorobacter sp. (strain TPSY)) protein is Ribosome-recycling factor.